The chain runs to 306 residues: D-alanine--D-alanine ligase (306 aa).

Positions 100 to 295 (KQIFRRAGLP…FGQLLERLME (196 aa)) constitute an ATP-grasp domain. 127–180 (RLPYPLFVKSNTGGSSLRLGRARNRAELDDIMGQIFAAGEEVIMEPVLPGREVT) serves as a coordination point for ATP. Mg(2+) contacts are provided by D249, E262, and N264.

Belongs to the D-alanine--D-alanine ligase family. It depends on Mg(2+) as a cofactor. Requires Mn(2+) as cofactor.

The protein localises to the cytoplasm. It carries out the reaction 2 D-alanine + ATP = D-alanyl-D-alanine + ADP + phosphate + H(+). It participates in cell wall biogenesis; peptidoglycan biosynthesis. In terms of biological role, cell wall formation. In Desulfovibrio desulfuricans (strain ATCC 27774 / DSM 6949 / MB), this protein is D-alanine--D-alanine ligase.